Reading from the N-terminus, the 274-residue chain is ATP synthase subunit delta (274 aa).

It belongs to the ATPase delta chain family. In terms of assembly, F-type ATPases have 2 components, F(1) - the catalytic core - and F(0) - the membrane proton channel. F(1) has five subunits: alpha(3), beta(3), gamma(1), delta(1), epsilon(1). F(0) has three main subunits: a(1), b(2) and c(10-14). The alpha and beta chains form an alternating ring which encloses part of the gamma chain. F(1) is attached to F(0) by a central stalk formed by the gamma and epsilon chains, while a peripheral stalk is formed by the delta and b chains.

The protein localises to the cell membrane. Functionally, f(1)F(0) ATP synthase produces ATP from ADP in the presence of a proton or sodium gradient. F-type ATPases consist of two structural domains, F(1) containing the extramembraneous catalytic core and F(0) containing the membrane proton channel, linked together by a central stalk and a peripheral stalk. During catalysis, ATP synthesis in the catalytic domain of F(1) is coupled via a rotary mechanism of the central stalk subunits to proton translocation. Its function is as follows. This protein is part of the stalk that links CF(0) to CF(1). It either transmits conformational changes from CF(0) to CF(1) or is implicated in proton conduction. The sequence is that of ATP synthase subunit delta from Corynebacterium efficiens (strain DSM 44549 / YS-314 / AJ 12310 / JCM 11189 / NBRC 100395).